Consider the following 356-residue polypeptide: tRNA N6-adenosine threonylcarbamoyltransferase (356 aa).

His115 and His119 together coordinate Fe cation. Substrate-binding positions include 138 to 142 (LVSGG), Asp171, Gly184, and Asn283. Residue Asp311 participates in Fe cation binding.

This sequence belongs to the KAE1 / TsaD family. Fe(2+) is required as a cofactor.

Its subcellular location is the cytoplasm. The catalysed reaction is L-threonylcarbamoyladenylate + adenosine(37) in tRNA = N(6)-L-threonylcarbamoyladenosine(37) in tRNA + AMP + H(+). Functionally, required for the formation of a threonylcarbamoyl group on adenosine at position 37 (t(6)A37) in tRNAs that read codons beginning with adenine. Is involved in the transfer of the threonylcarbamoyl moiety of threonylcarbamoyl-AMP (TC-AMP) to the N6 group of A37, together with TsaE and TsaB. TsaD likely plays a direct catalytic role in this reaction. The chain is tRNA N6-adenosine threonylcarbamoyltransferase from Prochlorococcus marinus (strain MIT 9303).